The sequence spans 427 residues: 3-phosphoshikimate 1-carboxyvinyltransferase (427 aa).

Positions 20, 21, and 25 each coordinate 3-phosphoshikimate. Lysine 20 serves as a coordination point for phosphoenolpyruvate. Phosphoenolpyruvate-binding residues include glycine 92 and arginine 120. Residues serine 166, glutamine 168, aspartate 312, and lysine 339 each coordinate 3-phosphoshikimate. Glutamine 168 serves as a coordination point for phosphoenolpyruvate. Aspartate 312 acts as the Proton acceptor in catalysis. Phosphoenolpyruvate contacts are provided by arginine 343 and arginine 385.

This sequence belongs to the EPSP synthase family. Monomer.

It is found in the cytoplasm. The enzyme catalyses 3-phosphoshikimate + phosphoenolpyruvate = 5-O-(1-carboxyvinyl)-3-phosphoshikimate + phosphate. The protein operates within metabolic intermediate biosynthesis; chorismate biosynthesis; chorismate from D-erythrose 4-phosphate and phosphoenolpyruvate: step 6/7. In terms of biological role, catalyzes the transfer of the enolpyruvyl moiety of phosphoenolpyruvate (PEP) to the 5-hydroxyl of shikimate-3-phosphate (S3P) to produce enolpyruvyl shikimate-3-phosphate and inorganic phosphate. This Streptococcus pneumoniae (strain Hungary19A-6) protein is 3-phosphoshikimate 1-carboxyvinyltransferase.